Consider the following 252-residue polypeptide: uncharacterized protein (252 aa).

The signal sequence occupies residues 1-23 (MKLLKTVPAIVMLAGGMFASLNA). The interval 231 to 252 (EPPESAPEHTDRRTTLSLGYSM) is disordered.

This is an uncharacterized protein from Escherichia coli (strain K12).